The sequence spans 808 residues: Na(+)/H(+) antiporter 2 (808 aa).

The next 9 helical transmembrane spans lie at 12–32 (HVAY…SLFV), 36–56 (LYIG…PHCL), 70–90 (ITLE…SVEL), 105–125 (LLVP…WILV), 128–148 (LNFP…PVLA), 174–194 (CNDG…LYPG), 203–223 (WICV…CIIG), 244–264 (FLAF…MLGV), and 267–287 (LLVS…AAKT). N-linked (GlcNAc...) asparagine glycosylation occurs at Asn-291. A run of 5 helical transmembrane segments spans residues 294 to 314 (NVID…ILPW), 319 to 339 (NPDI…VIFL), 361 to 381 (AMFI…AITS), 409 to 429 (VMAC…IVHG), and 432 to 452 (VAVI…LPTG). Disordered regions lie at residues 478 to 499 (QRLD…SGMV) and 541 to 562 (HAST…NGRA). A compositionally biased stretch (polar residues) spans 542–561 (ASTNDSHGTTTANLGTSNGR). Residues Asn-545 and Asn-602 are each glycosylated (N-linked (GlcNAc...) asparagine). A disordered region spans residues 774–808 (LHSEDEMADDEAESENDMDYEDSDGPASRFKDHAD). Positions 779–797 (EMADDEAESENDMDYEDSD) are enriched in acidic residues.

The protein belongs to the fungal Na(+)/H(+) exchanger family.

It localises to the membrane. Functionally, sodium export from cell, takes up external protons in exchange for internal sodium ions. Seems to be poorly expressed. The sequence is that of Na(+)/H(+) antiporter 2 (SOD22) from Zygosaccharomyces rouxii.